The primary structure comprises 345 residues: NADH-quinone oxidoreductase subunit H (345 aa).

Transmembrane regions (helical) follow at residues 13 to 33, 84 to 104, 115 to 135, 161 to 181, 190 to 210, 248 to 268, 277 to 297, and 309 to 329; these read VIIL…LLFL, FILA…VIPF, VAIL…IMGG, IGLI…GDIV, LFNW…ISCL, YIAI…GWLS, PLWM…VKAI, and LGWK…AFAA.

It belongs to the complex I subunit 1 family. As to quaternary structure, NDH-1 is composed of 14 different subunits. Subunits NuoA, H, J, K, L, M, N constitute the membrane sector of the complex.

It localises to the cell inner membrane. It catalyses the reaction a quinone + NADH + 5 H(+)(in) = a quinol + NAD(+) + 4 H(+)(out). Its function is as follows. NDH-1 shuttles electrons from NADH, via FMN and iron-sulfur (Fe-S) centers, to quinones in the respiratory chain. The immediate electron acceptor for the enzyme in this species is believed to be ubiquinone. Couples the redox reaction to proton translocation (for every two electrons transferred, four hydrogen ions are translocated across the cytoplasmic membrane), and thus conserves the redox energy in a proton gradient. This subunit may bind ubiquinone. This is NADH-quinone oxidoreductase subunit H from Ruegeria sp. (strain TM1040) (Silicibacter sp.).